We begin with the raw amino-acid sequence, 159 residues long: Ribonuclease H (159 aa).

An RNase H type-1 domain is found at 2–144 (SQDPVIIHTD…ADELATRGLQ (143 aa)). Asp-11, Glu-50, Asp-72, and Asp-136 together coordinate Mg(2+).

This sequence belongs to the RNase H family. In terms of assembly, monomer. Mg(2+) is required as a cofactor.

The protein resides in the cytoplasm. The enzyme catalyses Endonucleolytic cleavage to 5'-phosphomonoester.. Functionally, endonuclease that specifically degrades the RNA of RNA-DNA hybrids. The polypeptide is Ribonuclease H (Mycolicibacterium smegmatis (strain ATCC 700084 / mc(2)155) (Mycobacterium smegmatis)).